We begin with the raw amino-acid sequence, 129 residues long: Transcription antitermination protein NusB (129 aa).

Belongs to the NusB family.

Involved in transcription antitermination. Required for transcription of ribosomal RNA (rRNA) genes. Binds specifically to the boxA antiterminator sequence of the ribosomal RNA (rrn) operons. The sequence is that of Transcription antitermination protein NusB from Staphylococcus aureus (strain N315).